The following is a 100-amino-acid chain: Small ribosomal subunit protein uS14c (100 aa).

It belongs to the universal ribosomal protein uS14 family. Part of the 30S ribosomal subunit.

It is found in the plastid. It localises to the chloroplast. In terms of biological role, binds 16S rRNA, required for the assembly of 30S particles. This is Small ribosomal subunit protein uS14c from Cyanidioschyzon merolae (strain NIES-3377 / 10D) (Unicellular red alga).